A 243-amino-acid chain; its full sequence is Segregation and condensation protein A (243 aa).

Belongs to the ScpA family. In terms of assembly, component of a cohesin-like complex composed of ScpA, ScpB and the Smc homodimer, in which ScpA and ScpB bind to the head domain of Smc. The presence of the three proteins is required for the association of the complex with DNA.

The protein localises to the cytoplasm. Functionally, participates in chromosomal partition during cell division. May act via the formation of a condensin-like complex containing Smc and ScpB that pull DNA away from mid-cell into both cell halves. This Staphylococcus aureus (strain NCTC 8325 / PS 47) protein is Segregation and condensation protein A.